A 279-amino-acid polypeptide reads, in one-letter code: Isopentenyl-diphosphate delta-isomerase idi1 (279 aa).

Lysine 78 is a substrate binding site. Residues histidine 82 and histidine 93 each contribute to the Mg(2+) site. Residues 91–249 enclose the Nudix hydrolase domain; that stretch reads LLHRAFSVFL…GLKFTPWFKL (159 aa). Substrate contacts are provided by glutamine 111 and lysine 116. The active site involves cysteine 128. Serine 129 provides a ligand contact to substrate. The Nudix box motif lies at 129–162; it reads SHPLGIPGETGAELDAAVLGVKRAAQRKLDQELG. 2 residues coordinate Mg(2+): glutamate 191 and glutamate 193. Glutamate 193 is an active-site residue.

This sequence belongs to the IPP isomerase type 1 family. Mg(2+) is required as a cofactor.

It carries out the reaction isopentenyl diphosphate = dimethylallyl diphosphate. Its pathway is isoprenoid biosynthesis; dimethylallyl diphosphate biosynthesis; dimethylallyl diphosphate from isopentenyl diphosphate: step 1/1. Isopentenyl-diphosphate delta-isomerase; part of the second module of ergosterol biosynthesis pathway that includes the middle steps of the pathway. Idi1 catalyzes the 1,3-allylic rearrangement of isopentenyl (IPP) to its highly electrophilic allylic isomer, dimethylallyl diphosphate (DMAPP). The second module is carried out in the vacuole and involves the formation of farnesyl diphosphate, which is also an important intermediate in the biosynthesis of ubiquinone, dolichol, heme and prenylated proteins. Activity by the mevalonate kinase erg12 (AFUA_4G07780) first converts mevalonate into 5-phosphomevalonate. 5-phosphomevalonate is then further converted to 5-diphosphomevalonate by the phosphomevalonate kinase erg8 (AFUA_5G10680). The diphosphomevalonate decarboxylase mvd1 (AFUA_4G07130) then produces isopentenyl diphosphate. The isopentenyl-diphosphate delta-isomerase idi1 (AFUA_6G11160) then catalyzes the 1,3-allylic rearrangement of the homoallylic substrate isopentenyl (IPP) to its highly electrophilic allylic isomer, dimethylallyl diphosphate (DMAPP). Finally the farnesyl diphosphate synthase erg20 (AFUA_5G02450) catalyzes the sequential condensation of isopentenyl pyrophosphate with dimethylallyl pyrophosphate, and then with the resultant geranylpyrophosphate to the ultimate product farnesyl pyrophosphate. The polypeptide is Isopentenyl-diphosphate delta-isomerase idi1 (Aspergillus fumigatus (strain ATCC MYA-4609 / CBS 101355 / FGSC A1100 / Af293) (Neosartorya fumigata)).